The chain runs to 587 residues: MKRTWNVCLTALLSVLLVAGSVPFHAEAKKPPKSYDEYKQVDVGKDGMVATAHPLASEIGADVLKKGGNAIDAAVAIQFALNVTEPMMSGIGGGGFMMVYDGKTKDTTIIDSRERAPAGATPDMFLDENGKAIPFSERVTKGTAVGVPGTLKGLEEALDKWGTRSMKQLITPSIKLAEKGFPIDSVLAEAISDYQEKLSRTAAKDVFLPNGEPLKEGDTLIQKDLAKTFKLIRSKGTDAFYKGKFAKTLSDTVQDFGGSMTEKDLENYDITIDEPIWGDYQGYQIATTPPPSSGGIFLLQMLKILDHFNLSQYDVRSWEKYQLLAETMHLSYADRASYAGDPEFVNVPLKGLLHPDYIKERQQLINLDQVNKKPKAGDPWKYQEGSANYKQVEQPKDKVEGQTTHFTVADRWGNVVSYTTTIEQLFGTGIMVPDYGVILNNELTDFDAIPGGANEVQPNKRPLSSMTPTILFKDDKPVLTVGSPGGATIISSVLQTILYHIEYGMELKAAVEEPRIYTNSMSSYRYEDGVPKDVLSKLNGMGHKFGTSPVDIGNVQSISIDHENGTFKGVADSSRNGAAIGINLKRK.

An N-terminal signal peptide occupies residues 1-28; it reads MKRTWNVCLTALLSVLLVAGSVPFHAEA. Residues 29–35 constitute a propeptide that is removed on maturation; it reads KKPPKSY. Arg113 contacts L-glutamate. The active-site Nucleophile is the Thr403. L-glutamate-binding positions include Thr421, Glu423, Glu442, Asp445, 464–465, and 485–486; these read SS and GG.

The protein belongs to the gamma-glutamyltransferase family. As to quaternary structure, this enzyme consists of two polypeptide chains, which are synthesized in precursor form from a single polypeptide. In terms of processing, cleaved by autocatalysis into a large and a small subunit.

The protein localises to the secreted. It catalyses the reaction an N-terminal (5-L-glutamyl)-[peptide] + an alpha-amino acid = 5-L-glutamyl amino acid + an N-terminal L-alpha-aminoacyl-[peptide]. The enzyme catalyses glutathione + H2O = L-cysteinylglycine + L-glutamate. The catalysed reaction is an S-substituted glutathione + H2O = an S-substituted L-cysteinylglycine + L-glutamate. Its pathway is sulfur metabolism; glutathione metabolism. Cleaves the gamma-glutamyl bond of extracellular glutathione (gamma-Glu-Cys-Gly), glutathione conjugates, and other gamma-glutamyl compounds. The metabolism of glutathione releases free glutamate and the dipeptide cysteinyl-glycine, which is hydrolyzed to cysteine and glycine by dipeptidases. This Bacillus subtilis (strain 168) protein is Glutathione hydrolase proenzyme (ggt).